Consider the following 526-residue polypeptide: Tyrosine-protein kinase transforming protein Src (526 aa).

The tract at residues 1–57 (MGSSKSKPKDPSQRRRSLEPPDSTHHGGFPASQTPNKTAAPDTHRTPSRSFGTVATE) is disordered. Glycine 2 is lipidated: N-myristoyl glycine; by host. Residues 7–25 (KPKDPSQRRRSLEPPDSTH) are compositionally biased toward basic and acidic residues. The region spanning 81-142 (GGVTTFVALY…PSNYVAPSDS (62 aa)) is the SH3 domain. Positions 148–245 (WYFGKITRRE…GLCHRLTNVC (98 aa)) constitute an SH2 domain. A Protein kinase domain is found at 267–517 (LRLEVKLGQG…TFEYLQAQLL (251 aa)). ATP contacts are provided by residues 273-281 (LGQGCFGEV) and lysine 295. Aspartate 386 serves as the catalytic Proton acceptor. Residue tyrosine 416 is modified to Phosphotyrosine; by autocatalysis.

This sequence belongs to the protein kinase superfamily. Tyr protein kinase family. SRC subfamily. In terms of assembly, homodimer. In terms of processing, the phosphorylated form is termed pp60v-src.

The enzyme catalyses L-tyrosyl-[protein] + ATP = O-phospho-L-tyrosyl-[protein] + ADP + H(+). Its function is as follows. This phosphoprotein, required for both the initiation and the maintenance of neoplastic transformation, is a protein kinase that catalyzes the phosphorylation of tyrosine residues in vitro. Causes mitotic slippage in addition to cytokinesis failure in the host cell. Phosphorylates and attenuates the activity of host CDK1, possibly causing the mitotic slippage. The protein is Tyrosine-protein kinase transforming protein Src (V-SRC) of Rous sarcoma virus subgroup A (strain Schmidt-Ruppin) (RSV-SR-A).